We begin with the raw amino-acid sequence, 229 residues long: Small ribosomal subunit protein uS2c (229 aa).

The protein belongs to the universal ribosomal protein uS2 family.

The protein localises to the plastid. It is found in the chloroplast. The polypeptide is Small ribosomal subunit protein uS2c (rps2) (Emiliania huxleyi (Coccolithophore)).